The following is a 422-amino-acid chain: Probable glucuronosyltransferase Os01g0926400 (422 aa).

Over 1–8 (MGTRPCAG) the chain is Cytoplasmic. A helical; Signal-anchor for type II membrane protein membrane pass occupies residues 9-29 (VASAVAAAVAVLLLAVSCFAA). Topologically, residues 30–422 (AATTTQKHGR…QGLENDLKPW (393 aa)) are lumenal. N-linked (GlcNAc...) asparagine glycosylation is present at N149.

It belongs to the glycosyltransferase 47 family.

It is found in the golgi apparatus membrane. Its function is as follows. Involved in the synthesis of glucuronoxylan hemicellulose in secondary cell walls. The protein is Probable glucuronosyltransferase Os01g0926400 of Oryza sativa subsp. japonica (Rice).